Consider the following 188-residue polypeptide: MNITATVLLAFGMSMDAFAASIGKGAPLHKPKFSEALRTGLIFGAVETLTPLIGWGMGMLASRFVLEWNHWIAFVLLIFLGGRMIIEGFRGADDEDEEPRRRHGFWLLVTTAIATSLDAMAVGVGLAFLQVNIIATALAIGCATLIMSTLGMMVGRFIGSIIGKKAEILGGLVLIGIGVQILWTHFHG.

The next 5 helical transmembrane spans lie at 3 to 23 (ITATVLLAFGMSMDAFAASIG), 66 to 86 (LEWNHWIAFVLLIFLGGRMII), 106 to 128 (WLLVTTAIATSLDAMAVGVGLAF), 143 to 163 (ATLIMSTLGMMVGRFIGSIIG), and 168 to 188 (ILGGLVLIGIGVQILWTHFHG).

The protein belongs to the MntP (TC 9.B.29) family.

The protein localises to the cell inner membrane. In terms of biological role, probably functions as a manganese efflux pump. This Shigella flexneri serotype 5b (strain 8401) protein is Probable manganese efflux pump MntP.